A 123-amino-acid polypeptide reads, in one-letter code: Small ribosomal subunit protein uS17 (123 aa).

This sequence belongs to the universal ribosomal protein uS17 family. Part of the 30S ribosomal subunit.

One of the primary rRNA binding proteins, it binds specifically to the 5'-end of 16S ribosomal RNA. The protein is Small ribosomal subunit protein uS17 of Pyrobaculum aerophilum (strain ATCC 51768 / DSM 7523 / JCM 9630 / CIP 104966 / NBRC 100827 / IM2).